A 176-amino-acid polypeptide reads, in one-letter code: ATP-dependent protease subunit HslV (176 aa).

Thr-5 is a catalytic residue. The Na(+) site is built by Gly-161, Cys-164, and Thr-167.

This sequence belongs to the peptidase T1B family. HslV subfamily. In terms of assembly, a double ring-shaped homohexamer of HslV is capped on each side by a ring-shaped HslU homohexamer. The assembly of the HslU/HslV complex is dependent on binding of ATP.

It is found in the cytoplasm. The enzyme catalyses ATP-dependent cleavage of peptide bonds with broad specificity.. Its activity is regulated as follows. Allosterically activated by HslU binding. In terms of biological role, protease subunit of a proteasome-like degradation complex believed to be a general protein degrading machinery. This Wolinella succinogenes (strain ATCC 29543 / DSM 1740 / CCUG 13145 / JCM 31913 / LMG 7466 / NCTC 11488 / FDC 602W) (Vibrio succinogenes) protein is ATP-dependent protease subunit HslV.